The sequence spans 197 residues: Imidazoleglycerol-phosphate dehydratase (197 aa).

Belongs to the imidazoleglycerol-phosphate dehydratase family.

The protein localises to the cytoplasm. It carries out the reaction D-erythro-1-(imidazol-4-yl)glycerol 3-phosphate = 3-(imidazol-4-yl)-2-oxopropyl phosphate + H2O. It functions in the pathway amino-acid biosynthesis; L-histidine biosynthesis; L-histidine from 5-phospho-alpha-D-ribose 1-diphosphate: step 6/9. The protein is Imidazoleglycerol-phosphate dehydratase of Streptomyces avermitilis (strain ATCC 31267 / DSM 46492 / JCM 5070 / NBRC 14893 / NCIMB 12804 / NRRL 8165 / MA-4680).